The chain runs to 377 residues: Ipis-1 (377 aa).

2 N-linked (GlcNAc...) asparagine glycosylation sites follow: N11 and N226.

It belongs to the serpin family. As to expression, female salivary gland. Not detected in midgut and other tissues.

It is found in the secreted. Functionally, salivary protein with immunosuppressive properties that can modulate blood feeding of ticks on vertebrate species. Inhibits proliferation of bovine peripheral blood mononuclear cells (PBMCs). Inhibits IFN-gamma (IFNG) production by bovine PBMCs. The polypeptide is Ipis-1 (Ixodes persulcatus (Taiga tick)).